The following is a 1089-amino-acid chain: Platelet-derived growth factor receptor alpha (1089 aa).

An N-terminal signal peptide occupies residues 1 to 23 (MGTSHPAFLVLGCLLTGLSLILC). 5 consecutive Ig-like C2-type domains span residues 24–113 (QLSL…NELE), 117–201 (IYIY…FQTI), 202–306 (PFNV…KKVT), 319–410 (PTFS…FELL), and 414–517 (PSSI…LKLV). Residues 24–528 (QLSLPSILPN…PTLRSELTVA (505 aa)) lie on the Extracellular side of the membrane. N-linked (GlcNAc...) asparagine glycans are attached at residues Asn42, Asn76, Asn103, and Asn179. A disulfide bond links Cys49 and Cys100. 2 cysteine pairs are disulfide-bonded: Cys150–Cys189 and Cys235–Cys290. N-linked (GlcNAc...) asparagine glycosylation is found at Asn353, Asn359, Asn458, and Asn468. Cysteines 435 and 501 form a disulfide. The chain crosses the membrane as a helical span at residues 529–549 (AAVLVLLVIVIISLIVLVVIW). Over 550 to 1089 (KQKPRYEIRW…SSDLVEDSFL (540 aa)) the chain is Cytoplasmic. Phosphotyrosine; by autocatalysis is present on residues Tyr572 and Tyr574. The Protein kinase domain occupies 593 to 954 (LVLGRVLGSG…HLSEIVENLL (362 aa)). Residues 599–607 (LGSGAFGKV) and Lys627 each bind ATP. 6 positions are modified to phosphotyrosine; by autocatalysis: Tyr720, Tyr731, Tyr742, Tyr754, Tyr762, and Tyr768. Asp818 functions as the Proton acceptor in the catalytic mechanism. 3 positions are modified to phosphotyrosine; by autocatalysis: Tyr849, Tyr988, and Tyr1018. The interval 1018 to 1089 (YIIPLPDIDP…SSDLVEDSFL (72 aa)) is disordered. Over residues 1041-1059 (SSQTSEESAIETGSSSSTF) the composition is skewed to polar residues. The segment covering 1065–1089 (ETIEDIDMMDDIGIDSSDLVEDSFL) has biased composition (acidic residues).

Belongs to the protein kinase superfamily. Tyr protein kinase family. CSF-1/PDGF receptor subfamily. Interacts with homodimeric PDGFA, PDGFB and PDGFC, and with heterodimers formed by PDGFA and PDGFB. Monomer in the absence of bound ligand. Interaction with dimeric PDGFA, PDGFB and/or PDGFC leads to receptor dimerization, where both PDGFRA homodimers and heterodimers with PDGFRB are observed. Interacts (tyrosine phosphorylated) with SHB (via SH2 domain). Interacts (tyrosine phosphorylated) with SHF (via SH2 domain). Interacts (tyrosine phosphorylated) with SRC (via SH2 domain). Interacts (tyrosine phosphorylated) with PIK3R1. Interacts (tyrosine phosphorylated) with PLCG1 (via SH2 domain). Interacts (tyrosine phosphorylated) with CRK, GRB2 and GRB7. Interacts with CD248; this interaction promotes PDGF receptor signaling pathway. In terms of assembly, (Microbial infection) Interacts with human cytomegalovirus/HHV-5 envelope glycoprotein B/gB. Also interacts with the trimeric complex gH-gL-gO. Trimer-PDGFRA interaction has an inhibitory effect on PDGFRA signaling. N-glycosylated. Post-translationally, ubiquitinated, leading to its internalization and degradation. In terms of processing, autophosphorylated on tyrosine residues upon ligand binding. Autophosphorylation occurs in trans, i.e. one subunit of the dimeric receptor phosphorylates tyrosine residues on the other subunit. Phosphorylation at Tyr-731 and Tyr-742 is important for interaction with PIK3R1. Phosphorylation at Tyr-720 and Tyr-754 is important for interaction with PTPN11. Phosphorylation at Tyr-762 is important for interaction with CRK. Phosphorylation at Tyr-572 and Tyr-574 is important for interaction with SRC and SRC family members. Phosphorylation at Tyr-988 and Tyr-1018 is important for interaction with PLCG1. As to expression, detected in platelets (at protein level). Widely expressed. Detected in brain, fibroblasts, smooth muscle, heart, and embryo. Expressed in primary and metastatic colon tumors and in normal colon tissue.

It localises to the cell membrane. The protein localises to the cell projection. It is found in the cilium. Its subcellular location is the golgi apparatus. The enzyme catalyses L-tyrosyl-[protein] + ATP = O-phospho-L-tyrosyl-[protein] + ADP + H(+). With respect to regulation, present in an inactive conformation in the absence of bound ligand. Binding of PDGFA and/or PDGFB leads to dimerization and activation by autophosphorylation on tyrosine residues. Inhibited by imatinib, nilotinib and sorafenib. Tyrosine-protein kinase that acts as a cell-surface receptor for PDGFA, PDGFB and PDGFC and plays an essential role in the regulation of embryonic development, cell proliferation, survival and chemotaxis. Depending on the context, promotes or inhibits cell proliferation and cell migration. Plays an important role in the differentiation of bone marrow-derived mesenchymal stem cells. Required for normal skeleton development and cephalic closure during embryonic development. Required for normal development of the mucosa lining the gastrointestinal tract, and for recruitment of mesenchymal cells and normal development of intestinal villi. Plays a role in cell migration and chemotaxis in wound healing. Plays a role in platelet activation, secretion of agonists from platelet granules, and in thrombin-induced platelet aggregation. Binding of its cognate ligands - homodimeric PDGFA, homodimeric PDGFB, heterodimers formed by PDGFA and PDGFB or homodimeric PDGFC -leads to the activation of several signaling cascades; the response depends on the nature of the bound ligand and is modulated by the formation of heterodimers between PDGFRA and PDGFRB. Phosphorylates PIK3R1, PLCG1, and PTPN11. Activation of PLCG1 leads to the production of the cellular signaling molecules diacylglycerol and inositol 1,4,5-trisphosphate, mobilization of cytosolic Ca(2+) and the activation of protein kinase C. Phosphorylates PIK3R1, the regulatory subunit of phosphatidylinositol 3-kinase, and thereby mediates activation of the AKT1 signaling pathway. Mediates activation of HRAS and of the MAP kinases MAPK1/ERK2 and/or MAPK3/ERK1. Promotes activation of STAT family members STAT1, STAT3 and STAT5A and/or STAT5B. Receptor signaling is down-regulated by protein phosphatases that dephosphorylate the receptor and its down-stream effectors, and by rapid internalization of the activated receptor. In Homo sapiens (Human), this protein is Platelet-derived growth factor receptor alpha (PDGFRA).